The following is a 119-amino-acid chain: Integration host factor subunit beta (119 aa).

The disordered stretch occupies residues Asp91–His119. Residues Gly94–Asp107 are compositionally biased toward low complexity.

This sequence belongs to the bacterial histone-like protein family. As to quaternary structure, heterodimer of an alpha and a beta chain.

In terms of biological role, this protein is one of the two subunits of integration host factor, a specific DNA-binding protein that functions in genetic recombination as well as in transcriptional and translational control. This is Integration host factor subunit beta from Bordetella parapertussis (strain 12822 / ATCC BAA-587 / NCTC 13253).